Here is a 186-residue protein sequence, read N- to C-terminus: Large ribosomal subunit protein uL15 (186 aa).

The disordered stretch occupies residues 1-48 (MDLSSLRPAKGAVKARKRVGRGPGSGNGTTAGKGNKGQQSRSGYQRPV). Over residues 21-35 (RGPGSGNGTTAGKGN) the composition is skewed to gly residues.

The protein belongs to the universal ribosomal protein uL15 family. Part of the 50S ribosomal subunit.

Binds to the 23S rRNA. This chain is Large ribosomal subunit protein uL15, found in Chlorobaculum tepidum (strain ATCC 49652 / DSM 12025 / NBRC 103806 / TLS) (Chlorobium tepidum).